We begin with the raw amino-acid sequence, 122 residues long: Phycocyanin PC645 alpha-2 subunit (122 aa).

Residues D54 and R68 each contribute to the (2R,3E)-phycocyanobilin site. Mesobiliverdin contacts are provided by C70, K76, E77, and C92.

Belongs to the phycoerythrin family. Heterotetramer of 2 different alpha chains and 2 identical beta chains which form 2 alpha-beta heterodimers within the heterotetramer. Post-translationally, contains two phycocyanobilin chromophores and one mesobiliverdin chromophore with binding mediated by both the alpha and beta subunits.

Its subcellular location is the plastid. It localises to the chloroplast thylakoid membrane. Light-harvesting photosynthetic tetrapyrrole chromophore-protein from the phycobiliprotein complex. The sequence is that of Phycocyanin PC645 alpha-2 subunit from Chroomonas sp. (strain CCMP270).